The following is a 608-amino-acid chain: UvrABC system protein C (608 aa).

Residues 22-100 (EKPGIYQYLN…IKKYKPRYNV (79 aa)) enclose the GIY-YIG domain. Positions 214–249 (QEISRLLYQRMQDLAAEMKFEEAQKVKEKYALIENY) constitute a UVR domain.

The protein belongs to the UvrC family. Interacts with UvrB in an incision complex.

The protein resides in the cytoplasm. Its function is as follows. The UvrABC repair system catalyzes the recognition and processing of DNA lesions. UvrC both incises the 5' and 3' sides of the lesion. The N-terminal half is responsible for the 3' incision and the C-terminal half is responsible for the 5' incision. This Bacteroides fragilis (strain ATCC 25285 / DSM 2151 / CCUG 4856 / JCM 11019 / LMG 10263 / NCTC 9343 / Onslow / VPI 2553 / EN-2) protein is UvrABC system protein C.